We begin with the raw amino-acid sequence, 552 residues long: Urocanate hydratase (552 aa).

NAD(+) contacts are provided by residues 49–50, Gln127, 173–175, Glu193, Arg198, 239–240, 260–264, 270–271, and Tyr319; these read GG, GMG, NA, QTSAH, and YI. Cys407 is a catalytic residue. Gly489 provides a ligand contact to NAD(+).

It belongs to the urocanase family. NAD(+) serves as cofactor.

The protein resides in the cytoplasm. The catalysed reaction is 4-imidazolone-5-propanoate = trans-urocanate + H2O. It functions in the pathway amino-acid degradation; L-histidine degradation into L-glutamate; N-formimidoyl-L-glutamate from L-histidine: step 2/3. Catalyzes the conversion of urocanate to 4-imidazolone-5-propionate. This is Urocanate hydratase from Geobacillus sp. (strain WCH70).